Reading from the N-terminus, the 317-residue chain is Transaldolase 2 (317 aa).

Lysine 132 (schiff-base intermediate with substrate) is an active-site residue.

Belongs to the transaldolase family. Type 1 subfamily. In terms of assembly, homodimer.

The protein resides in the cytoplasm. The enzyme catalyses D-sedoheptulose 7-phosphate + D-glyceraldehyde 3-phosphate = D-erythrose 4-phosphate + beta-D-fructose 6-phosphate. The protein operates within carbohydrate degradation; pentose phosphate pathway; D-glyceraldehyde 3-phosphate and beta-D-fructose 6-phosphate from D-ribose 5-phosphate and D-xylulose 5-phosphate (non-oxidative stage): step 2/3. In terms of biological role, transaldolase is important for the balance of metabolites in the pentose-phosphate pathway. The sequence is that of Transaldolase 2 from Pectobacterium atrosepticum (strain SCRI 1043 / ATCC BAA-672) (Erwinia carotovora subsp. atroseptica).